The chain runs to 138 residues: Large ribosomal subunit protein uL16 (138 aa).

Belongs to the universal ribosomal protein uL16 family. As to quaternary structure, part of the 50S ribosomal subunit.

Functionally, binds 23S rRNA and is also seen to make contacts with the A and possibly P site tRNAs. This Syntrophobacter fumaroxidans (strain DSM 10017 / MPOB) protein is Large ribosomal subunit protein uL16.